Reading from the N-terminus, the 117-residue chain is uncharacterized protein (117 aa).

The N-terminal stretch at 1–18 is a signal peptide; that stretch reads MKFFWVSSLLGLLGLSTA. Asn86 is a glycosylation site (N-linked (GlcNAc...) asparagine).

This is an uncharacterized protein from Schizosaccharomyces pombe (strain 972 / ATCC 24843) (Fission yeast).